The following is a 209-amino-acid chain: Thiamine-phosphate synthase (209 aa).

4-amino-2-methyl-5-(diphosphooxymethyl)pyrimidine is bound by residues 35-39 and asparagine 67; that span reads QLRNK. Mg(2+) contacts are provided by aspartate 68 and aspartate 87. A 4-amino-2-methyl-5-(diphosphooxymethyl)pyrimidine-binding site is contributed by serine 106. 132–134 lines the 2-[(2R,5Z)-2-carboxy-4-methylthiazol-5(2H)-ylidene]ethyl phosphate pocket; that stretch reads TGS. Residue lysine 135 coordinates 4-amino-2-methyl-5-(diphosphooxymethyl)pyrimidine. 2-[(2R,5Z)-2-carboxy-4-methylthiazol-5(2H)-ylidene]ethyl phosphate contacts are provided by residues glycine 163 and 183-184; that span reads IS.

Belongs to the thiamine-phosphate synthase family. Mg(2+) is required as a cofactor.

The enzyme catalyses 2-[(2R,5Z)-2-carboxy-4-methylthiazol-5(2H)-ylidene]ethyl phosphate + 4-amino-2-methyl-5-(diphosphooxymethyl)pyrimidine + 2 H(+) = thiamine phosphate + CO2 + diphosphate. It catalyses the reaction 2-(2-carboxy-4-methylthiazol-5-yl)ethyl phosphate + 4-amino-2-methyl-5-(diphosphooxymethyl)pyrimidine + 2 H(+) = thiamine phosphate + CO2 + diphosphate. The catalysed reaction is 4-methyl-5-(2-phosphooxyethyl)-thiazole + 4-amino-2-methyl-5-(diphosphooxymethyl)pyrimidine + H(+) = thiamine phosphate + diphosphate. It functions in the pathway cofactor biosynthesis; thiamine diphosphate biosynthesis; thiamine phosphate from 4-amino-2-methyl-5-diphosphomethylpyrimidine and 4-methyl-5-(2-phosphoethyl)-thiazole: step 1/1. Condenses 4-methyl-5-(beta-hydroxyethyl)thiazole monophosphate (THZ-P) and 2-methyl-4-amino-5-hydroxymethyl pyrimidine pyrophosphate (HMP-PP) to form thiamine monophosphate (TMP). The chain is Thiamine-phosphate synthase from Chlorobium phaeovibrioides (strain DSM 265 / 1930) (Prosthecochloris vibrioformis (strain DSM 265)).